Here is a 157-residue protein sequence, read N- to C-terminus: Heat shock 22 kDa protein, chloroplastic (157 aa).

A sHSP domain is found at 40–155 (GKAGHTHAPM…KPEPKRIAVT (116 aa)).

The protein belongs to the small heat shock protein (HSP20) family.

It localises to the plastid. Its subcellular location is the chloroplast. This Chlamydomonas reinhardtii (Chlamydomonas smithii) protein is Heat shock 22 kDa protein, chloroplastic.